The chain runs to 107 residues: MMRGNIAQLMQQAQKMQENLQRAQEELAKLEVTGSAGGGMVSVILSGTKECRKVRIDPSILNDQEMIEDLIAAAFNDASNKVDTESKERMGSATLGMSLPPGFKLPF.

This sequence belongs to the YbaB/EbfC family. As to quaternary structure, homodimer.

The protein resides in the cytoplasm. Its subcellular location is the nucleoid. Binds to DNA and alters its conformation. May be involved in regulation of gene expression, nucleoid organization and DNA protection. This is Nucleoid-associated protein XF_1808 from Xylella fastidiosa (strain 9a5c).